Consider the following 136-residue polypeptide: Protein NrdI (136 aa).

The protein belongs to the NrdI family.

In terms of biological role, probably involved in ribonucleotide reductase function. This Salmonella paratyphi B (strain ATCC BAA-1250 / SPB7) protein is Protein NrdI.